Reading from the N-terminus, the 460-residue chain is Inner membrane symporter YicJ (460 aa).

The Periplasmic portion of the chain corresponds to 1–11; that stretch reads MKSEVLSVKEK. Transmembrane regions (helical) follow at residues 12-32 and 33-53; these read IGYGMGDAASHIIFDNVMLYM and MFFYTDIFGIPAGFVGTMFLV. Over 54-80 the chain is Periplasmic; sequence ARALDAISDPCMGLLADRTRSRWGKFR. A helical transmembrane segment spans residues 81 to 101; sequence PWVLFGALPFGIVCVLAYSTP. Residues 102–116 lie on the Cytoplasmic side of the membrane; that stretch reads DLSMNGKMIYAAITY. The helical transmembrane segment at 117–137 threads the bilayer; it reads TLLTLLYTVVNIPYCALGGVI. Residues 138 to 152 are Periplasmic-facing; it reads TNDPTQRISLQSWRF. Residues 153 to 173 form a helical membrane-spanning segment; it reads VLATAGGMLSTVLMMPLVNLI. Over 174 to 181 the chain is Cytoplasmic; sequence GGDNKPLG. Residues 182–202 traverse the membrane as a helical segment; it reads FQGGIAVLSVVAFMMLAFCFF. Residues 203-248 are Periplasmic-facing; the sequence is TTKERVEAPPTTTSMREDLRDIWQNDQWRIVGLLTIFNILAVCVRG. Residues 249 to 269 traverse the membrane as a helical segment; the sequence is GAMMYYVTWILGTPEVFVAFL. At 270–288 the chain is on the cytoplasmic side; it reads TTYCVGNLIGSALAKPLTD. The chain crosses the membrane as a helical span at residues 289–309; the sequence is WKCKVTIFWWTNALLAVISLA. A topological domain (periplasmic) is located at residue Met310. A helical membrane pass occupies residues 311–331; it reads FFVPMQASITMFVFIFVIGVL. Topologically, residues 332-366 are cytoplasmic; the sequence is HQLVTPIQWVMMSDTVDYGEWCNGKRLTGISFAGT. A helical membrane pass occupies residues 367 to 387; sequence LFVLKLGLAFGGALIGWMLAY. Topologically, residues 388-403 are periplasmic; the sequence is GGYDAAEKAQNSATIS. A helical membrane pass occupies residues 404 to 424; sequence IIIALFTIVPAICYLLSAIIA. At 425–460 the chain is on the cytoplasmic side; the sequence is KRYYSLTTHNLKTVMEQLAQGKRRCQQQFTSQEVQN.

It belongs to the sodium:galactoside symporter (TC 2.A.2) family.

It localises to the cell inner membrane. This chain is Inner membrane symporter YicJ (yicJ), found in Escherichia coli (strain K12).